The chain runs to 407 residues: Probable succinyl-diaminopimelate desuccinylase (407 aa).

Histidine 72 is a Zn(2+) binding site. Aspartate 74 is a catalytic residue. Aspartate 105 is a binding site for Zn(2+). Glutamate 139 functions as the Proton acceptor in the catalytic mechanism. Residues glutamate 140, glutamate 165, and histidine 378 each coordinate Zn(2+).

The protein belongs to the peptidase M20A family. The cofactor is Zn(2+). It depends on Co(2+) as a cofactor.

It catalyses the reaction N-succinyl-(2S,6S)-2,6-diaminopimelate + H2O = (2S,6S)-2,6-diaminopimelate + succinate. It participates in amino-acid biosynthesis; L-lysine biosynthesis via DAP pathway; LL-2,6-diaminopimelate from (S)-tetrahydrodipicolinate (succinylase route): step 3/3. The protein is Probable succinyl-diaminopimelate desuccinylase (dapE) of Staphylococcus aureus (strain MRSA252).